The following is a 196-amino-acid chain: Large ribosomal subunit protein uL18 (196 aa).

Belongs to the universal ribosomal protein uL18 family. As to quaternary structure, part of the 50S ribosomal subunit. Contacts the 5S and 23S rRNAs.

This is one of the proteins that bind and probably mediate the attachment of the 5S RNA into the large ribosomal subunit, where it forms part of the central protuberance. In Thermofilum pendens (strain DSM 2475 / Hrk 5), this protein is Large ribosomal subunit protein uL18.